A 1320-amino-acid chain; its full sequence is Centrosomin (1320 aa).

The tract at residues 20-41 (ASFDVPRPPGGGNSPLPSQGRS) is disordered. Residues 97 to 516 (RKTVDVKMEL…SSQEKEIKKL (420 aa)) adopt a coiled-coil conformation. Residues 517 to 530 (NQENEQSANKENDC) show a composition bias toward basic and acidic residues. The disordered stretch occupies residues 517 to 554 (NQENEQSANKENDCAKTVISPSSSGRSMSDNEASSQEM). Residues 535 to 554 (ISPSSSGRSMSDNEASSQEM) are compositionally biased toward polar residues. Residue S545 is modified to Phosphoserine. Coiled-coil stretches lie at residues 626 to 654 (EADLQQSFTEAEYMRALERNKLLQRKVDV) and 712 to 983 (NSLL…LKLA). The Nuclear localization signal signature appears at 644–656 (RNKLLQRKVDVLF). T782 is modified (phosphothreonine). S785 carries the phosphoserine modification. Residues 810-823 (KKELEKRRSSEGQR) show a composition bias toward basic and acidic residues. Disordered regions lie at residues 810 to 849 (KKELEKRRSSEGQRKERRSLPLPSQQFDNQSESEAWSEPD) and 863 to 893 (SNSLAAPEQAISESESEGRTCATRQDRNRNS). Positions 831 to 843 (LPSQQFDNQSESE) are enriched in polar residues. Phosphoserine is present on residues S874, S876, S878, S1191, S1234, S1237, and S1239. The tract at residues 1220–1249 (VEMKTEGSASPKAKSEESTSPDSKSNVATG) is disordered. Over residues 1237–1247 (STSPDSKSNVA) the composition is skewed to polar residues.

In terms of assembly, monomer. As to expression, developing visceral mesoderm of the midgut, the central and peripheral nervous system, and developing gonads. Isoform J: Expressed in ovaries, testis and embryos. Isoform A: Expressed in testis only.

It localises to the cytoplasm. The protein resides in the cytoskeleton. The protein localises to the microtubule organizing center. It is found in the centrosome. Its subcellular location is the flagellum basal body. It localises to the perinuclear region. In terms of biological role, core component of the centrosome throughout spermatogenesis. May participate in mitotic spindle assembly and the mechanics of morphogenesis through an interaction with microtubules, either directly or indirectly. Is a target of several homeotic genes. The chain is Centrosomin (cnn) from Drosophila melanogaster (Fruit fly).